A 662-amino-acid chain; its full sequence is Chromosomal replication initiator protein DnaA (662 aa).

A domain I, interacts with DnaA modulators region spans residues 1 to 93 (MDDEQNVLAT…QVEGLGVRIA (93 aa)). Residues 93–322 (AAPATPTAER…STPAPANSSA (230 aa)) form a domain II region. A compositionally biased stretch (low complexity) spans 96 to 105 (ATPTAERAAA). Positions 96–294 (ATPTAERAAA…SDGPVERDDE (199 aa)) are disordered. Positions 114–123 (SRPERPRGER) are enriched in basic and acidic residues. The span at 166–199 (PPAAEYTPAAEYTPAAEYTPAAEYSPEPEYTPAT) shows a compositional bias: low complexity. Composition is skewed to basic and acidic residues over residues 236–248 (TPRR…RRDA) and 261–290 (PGDR…GPVE). The domain III, AAA+ region stretch occupies residues 323–539 (SLNAKYTFET…GALIRVTAFA (217 aa)). Positions 367, 369, 370, and 371 each coordinate ATP. Residues 540–662 (SLNGQPLDLS…LTARIKQRSR (123 aa)) form a domain IV, binds dsDNA region.

This sequence belongs to the DnaA family. As to quaternary structure, oligomerizes as a right-handed, spiral filament on DNA at oriC.

The protein resides in the cytoplasm. Plays an essential role in the initiation and regulation of chromosomal replication. ATP-DnaA binds to the origin of replication (oriC) to initiate formation of the DNA replication initiation complex once per cell cycle. Binds the DnaA box (a 9 base pair repeat at the origin) and separates the double-stranded (ds)DNA. Forms a right-handed helical filament on oriC DNA; dsDNA binds to the exterior of the filament while single-stranded (ss)DNA is stabiized in the filament's interior. The ATP-DnaA-oriC complex binds and stabilizes one strand of the AT-rich DNA unwinding element (DUE), permitting loading of DNA polymerase. After initiation quickly degrades to an ADP-DnaA complex that is not apt for DNA replication. Binds acidic phospholipids. This is Chromosomal replication initiator protein DnaA from Nocardia farcinica (strain IFM 10152).